The chain runs to 2016 residues: Cell adhesion molecule Dscam1 (2016 aa).

An N-terminal signal peptide occupies residues 1-28 (MNMPNERLKWLMLFAAVALIACGSQTLA). Residues 29-1618 (ANPPDADQKG…TIRIILSNLN (1590 aa)) lie on the Extracellular side of the membrane. Ig-like C2-type domains are found at residues 39–134 (PVFL…VHVR), 138–230 (AQYY…TRLS), 247–338 (PKIN…TVLT), 342–421 (PLSA…AELK), 428–522 (PPVI…AKLN), 527–613 (PYIR…LEVQ), 618–712 (PQVL…LQVN), 715–807 (PRWI…IMIS), and 812–904 (PEFT…ASIN). A glycan (N-linked (GlcNAc...) asparagine) is linked at Asn53. A disulfide bridge links Cys61 with Cys117. Residues Asp144, Asn146, and Leu161 each coordinate Zn(2+). 13 disulfide bridges follow: Cys160/Cys217, Cys160/Thr219, Cys160/Lys220, Cys269/Cys322, Pro270/Val323, Ala276/Gly329, Cys364/Cys405, Cys450/Cys506, Cys547/Cys596, Cys640/Cys694, Val641/Cys694, Val641/Ile695, and Cys736/Cys790. An N-linked (GlcNAc...) asparagine glycan is attached at Asn325. Residues Asn492 and Asn577 are each glycosylated (N-linked (GlcNAc...) asparagine). Asn820 carries an N-linked (GlcNAc...) asparagine glycan. A disulfide bond links Cys833 and Cys890. 4 consecutive Fibronectin type-III domains span residues 913 to 1007 (MPYA…TAEE), 1012 to 1116 (KPQN…TPSQ), 1117 to 1213 (PPSD…TEPD), and 1217 to 1310 (APTD…PSDQ). Asn1022, Asn1055, and Asn1186 each carry an N-linked (GlcNAc...) asparagine glycan. One can recognise an Ig-like C2-type 10 domain in the interval 1312–1394 (PAKIASFDDT…ENSIAKDSIT (83 aa)). A disulfide bridge links Cys1334 with Cys1382. Fibronectin type-III domains follow at residues 1402–1495 (PPQS…TKGQ) and 1499–1594 (LPEK…TGGT). A helical membrane pass occupies residues 1619–1639 (LVVPVVAALLVIIIAIIVICI). Residues 1640-2016 (LRSKGNHHKD…GFTAYDTMAV (377 aa)) lie on the Cytoplasmic side of the membrane. The PXXP motif 1; SH3-binding motif lies at 1685 to 1688 (PPVP). A disordered region spans residues 1688 to 1719 (PGSNYNTCDRIKRGRGGLRSNHSTWDPRRNPN). Positions 1727–1730 (PPVP) match the PXXP motif 2; SH3-binding motif. Disordered regions lie at residues 1787–1846 (GHAG…DDPA) and 1862–2016 (SQGG…TMAV). The segment covering 1826–1836 (KNSQGGQSSIY) has biased composition (polar residues). Positions 1842-1845 (YDDP) match the YXXP motif 1; potential SH2-binding motif. Residues 1875-1878 (YDDP) carry the YXXP motif 2; potential SH2-binding motif. Over residues 1897–1918 (GQPYDHYGSRGSMGRRSIGSAR) the composition is skewed to low complexity. Positions 1925-1932 (PEPPPPPP) match the Polyproline tract (probable SH3-binding) motif. Composition is skewed to basic and acidic residues over residues 1944–1962 (DSKE…DHGP) and 1974–1993 (QPKD…RNET). The span at 1994–2004 (GPKQLQLQQAN) shows a compositional bias: polar residues.

In terms of assembly, homodimer (via extracellular region); alternative splicing produces a potential 19,008 different ectodomains and the majority of these show strong isoform-specific homodimerization. Interacts (via cytoplasmic domain) with dock/dreadlocks (via SH2 and SH3 domains); the interaction is direct and may require Dscam1 to be phosphorylated. Phosphorylated on tyrosine residues in the intracellular domain. Tyrosine protein kinase Src42A and possibly Src64B are involved in this phosphorylation. In terms of processing, glycosylation on Asn-53 and Asn-325 is involved in stabilizing dimerization. Post-translationally, proteolytically processed, probably to generate a secreted form. As to expression, secreted into the hemolymph (at protein level). Expressed in brain and eye-antennal imaginal disks, including R3/R4 and R7 photoreceptor cells. Individual R3/R4 cells express between 14 and 50 randomly generated mRNAs encoding distinct isoforms.

It localises to the cell membrane. Its subcellular location is the cell projection. The protein resides in the neuron projection. The protein localises to the axon. It is found in the perikaryon. It localises to the dendrite. Its subcellular location is the secreted. Cell surface receptor involved in guidance and targeting of growing nerve axons. Required during Bolwig's organ differentiation for accurate and efficient targeting of photoreceptor neuron axons to their synaptic targets in the brain via the P2 intermediate target neuron. Involved in isoneural self-avoidance during dendrite arborization but not in heteroneural recognition and repulsion during tiling by related neurons of the same class. Involved in regulating axon bifurcation and divergent extension in the developing mushroom body. Essential for axon arborisation in ellipsoid body. Exhibits an extraordinary level of molecular diversity resulting from alternative splicing. Isoforms differing in their ectodomain makeup show a high degree of functional redundancy while isoforms with different transmembrane domains are involved in different neuronal morphogenetic processes and are differentially targeted to dendrites or axons. The vast majority of isoforms exhibit strong isoform-specific homophilic binding. Individual cells express a distinct randomly generated repertoire of isoforms. Cell surfaces bearing identical repertoires of Dscam1 isoforms, such as those from the same cell, trigger recognition and avoidance. A subset of isoforms is expressed in fat body cells and hemocytes, cells that are part of the insect immune response, and these isoforms are secreted into the hemolymph. The secreted form comprising the ectodomain can bind to bacteria, such as Escherichia coli, and may act as an opsonin enhancing their phagocytosis by hemocytes. The protein is Cell adhesion molecule Dscam1 of Drosophila melanogaster (Fruit fly).